A 379-amino-acid polypeptide reads, in one-letter code: Putative nucleosome assembly protein C2D10.11C (379 aa).

Positions 1–10 are enriched in basic and acidic residues; that stretch reads MSKGPGDFKK. 2 disordered regions span residues 1 to 30 and 345 to 379; these read MSKG…DVHL and SDFN…EISD. Residues 16 to 28 are compositionally biased toward polar residues; the sequence is AAQTPQNTPSSDV.

Belongs to the nucleosome assembly protein (NAP) family.

The protein localises to the nucleus. The chain is Putative nucleosome assembly protein C2D10.11C from Schizosaccharomyces pombe (strain 972 / ATCC 24843) (Fission yeast).